The sequence spans 68 residues: Arabinogalactan peptide 1 (68 aa).

A signal peptide spans 1-30; sequence MAGQLKSKIVAVAVAAVVVVASSLVGTASA. The GPI-anchor amidated serine moiety is linked to residue Ser-40. The propeptide at 41-68 is removed in mature form; the sequence is GATATAAAAPAFAAVSVAAAALGGYLFC.

Belongs to the AG-peptide AGP family. O-glycosylated on hydroxyprolines; noncontiguous hydroxylproline residues are glycosylated with arabinogalactan. Expressed in roots, stems, flowers and seeds.

It is found in the vacuole. Its subcellular location is the aleurone grain membrane. Functionally, proteoglycan that seems to be implicated in diverse developmental roles such as differentiation, cell-cell recognition, embryogenesis and programmed cell death. In Oryza sativa subsp. japonica (Rice), this protein is Arabinogalactan peptide 1 (AGPEP1).